Consider the following 189-residue polypeptide: Batroxicidin (189 aa).

The first 22 residues, 1 to 22 (MQGFFWKTWLVVALCGTSSSLA), serve as a signal peptide directing secretion. Positions 23–155 (HRPLSYGEAL…DEEKDRPKRV (133 aa)) are excised as a propeptide. 2 disulfides stabilise this stretch: cysteine 79/cysteine 90 and cysteine 101/cysteine 118. The segment covering 125–148 (EEEEEDEEEQKAEVEKDEEKEDEE) has biased composition (acidic residues). Residues 125-152 (EEEEEDEEEQKAEVEKDEEKEDEEKDRP) form a disordered region.

Belongs to the cathelicidin family. Expressed by the venom gland.

It localises to the secreted. The protein localises to the target cell membrane. In terms of biological role, potent antimicrobial peptide against Gram-negative (MIC=0.25 ug/ml against E.coli ATCC 25922, MIC=1 ug/ml against P.aeruginosa) and Gram-positive bacteria (MIC=32 ug/ml against E.faecalis, MIC=32 ug/ml against S.aureus). Adopts an amphipathic alpha helical conformation, that may allow to partition into the target membrane. Low hemolytic activities have been observed on mammalian cells. In addition, when tested in vitro on the parasite Trypanosoma cruzi (responsible of the Chagas disease), is able to reduce the number of the three forms (epimastigote, trypomastigote and amastigote) by inducing cell death through necrosis. The polypeptide is Batroxicidin (Bothrops atrox (Barba amarilla)).